The sequence spans 361 residues: Mitogen-activated protein kinase 1 (361 aa).

Residues 28–316 (YINLAYIGEG…VEAALAHPYL (289 aa)) enclose the Protein kinase domain. ATP is bound by residues 34-42 (IGEGAYGMV) and Lys57. Asp152 functions as the Proton acceptor in the catalytic mechanism. At Thr188 the chain carries Phosphothreonine. The TXY motif lies at 188–190 (TEY). Tyr190 bears the Phosphotyrosine mark.

Belongs to the protein kinase superfamily. CMGC Ser/Thr protein kinase family. MAP kinase subfamily. As to quaternary structure, interacts with CDK2AP2. It depends on Mg(2+) as a cofactor. Post-translationally, dually phosphorylated on Thr-188 and Tyr-190, which activates the enzyme. In terms of tissue distribution, expressed in the central nervous system, kidney, liver, intestine and the hematopoietic system. Also found in heart, muscle, pancreas and lung.

The protein localises to the cytoplasm. It localises to the cytoskeleton. Its subcellular location is the microtubule organizing center. It is found in the centrosome. The protein resides in the spindle. It catalyses the reaction L-seryl-[protein] + ATP = O-phospho-L-seryl-[protein] + ADP + H(+). The catalysed reaction is L-threonyl-[protein] + ATP = O-phospho-L-threonyl-[protein] + ADP + H(+). Activated by tyrosine phosphorylation during the M phase of the meiotic cell cycle. Dephosphorylated and inactivated by DUSP1. In terms of biological role, serine/threonine kinase which acts as an essential component of the MAP kinase signal transduction pathway. Plays an important role in the MAPK/ERK cascade. Depending on the cellular context, this cascade mediates diverse biological functions such as cell growth, adhesion, survival and differentiation through the regulation of transcription, translation, cytoskeletal rearrangements. The MAPK/ERK cascade also plays a role in initiation and regulation of meiosis, mitosis, and postmitotic functions in differentiated cells by phosphorylating a number of transcription factors. Many of the substrates are localized in the nucleus, and seem to participate in the regulation of transcription upon stimulation. However, other substrates are found in the cytosol as well as in other cellular organelles, and those are responsible for processes such as translation, mitosis and apoptosis. Moreover, the MAPK/ERK cascade is also involved in the regulation of the endosomal dynamics, including lysosome processing and endosome cycling through the perinuclear recycling compartment (PNRC); as well as in the fragmentation of the Golgi apparatus during mitosis. Phosphorylates microtubule-associated protein 2 (MAP2), myelin basic protein (MBP) and Elk-1. Phosphorylates dual specificity protein phosphatase 1 (DUSP1) during meiosis, increasing its stability. Activated by M phase promoting factor (MPF). Plays a role in the spindle assembly checkpoint. This chain is Mitogen-activated protein kinase 1 (mapk1), found in Xenopus laevis (African clawed frog).